A 198-amino-acid polypeptide reads, in one-letter code: MAEKQTAKRNRREEILQSLALMLESSDGSQRITTAKLAASVGVSEAALYRHFPSKTRMFDSLIEFIEDSLITRINLILKDEKDTTARLRLIVLLILGFGERNPGLTRILTGHALMFEQDRLQGRINQLFERIEVQLRQVMREKKMREGEGYTLDETLLASQLLAFCEGMLSRFVRSEFKYRPTDDFEARWPLVAAQLQ.

Positions Asn10 to Leu70 constitute an HTH tetR-type domain. The H-T-H motif DNA-binding region spans Thr33–Phe52. Residues Asp119–Lys144 adopt a coiled-coil conformation.

It belongs to the nucleoid occlusion factor SlmA family. In terms of assembly, homodimer. Interacts with FtsZ.

It localises to the cytoplasm. It is found in the nucleoid. Its function is as follows. Required for nucleoid occlusion (NO) phenomenon, which prevents Z-ring formation and cell division over the nucleoid. Acts as a DNA-associated cell division inhibitor that binds simultaneously chromosomal DNA and FtsZ, and disrupts the assembly of FtsZ polymers. SlmA-DNA-binding sequences (SBS) are dispersed on non-Ter regions of the chromosome, preventing FtsZ polymerization at these regions. The chain is Nucleoid occlusion factor SlmA from Klebsiella pneumoniae (strain 342).